The chain runs to 491 residues: Probable cytosol aminopeptidase (491 aa).

Mn(2+)-binding residues include K261 and D266. The active site involves K273. D284, D343, and E345 together coordinate Mn(2+). R347 is an active-site residue.

The protein belongs to the peptidase M17 family. The cofactor is Mn(2+).

It localises to the cytoplasm. The enzyme catalyses Release of an N-terminal amino acid, Xaa-|-Yaa-, in which Xaa is preferably Leu, but may be other amino acids including Pro although not Arg or Lys, and Yaa may be Pro. Amino acid amides and methyl esters are also readily hydrolyzed, but rates on arylamides are exceedingly low.. The catalysed reaction is Release of an N-terminal amino acid, preferentially leucine, but not glutamic or aspartic acids.. In terms of biological role, presumably involved in the processing and regular turnover of intracellular proteins. Catalyzes the removal of unsubstituted N-terminal amino acids from various peptides. In Stenotrophomonas maltophilia (strain K279a), this protein is Probable cytosol aminopeptidase.